Reading from the N-terminus, the 416-residue chain is PTS system N-acetylglucosamine-specific EIIC component (416 aa).

A PTS EIIC type-1 domain is found at 16-406; sequence SGLFQGLQKV…FNLKTPGREP (391 aa). 10 consecutive transmembrane segments (helical) span residues 68–88, 96–116, 130–150, 170–190, 196–216, 266–286, 298–318, 323–343, 344–364, and 375–395; these read AGGA…AIGF, TALA…AFPV, TYND…AVLW, LVPI…GLVW, GISN…ALFG, IFQA…ALAM, VLGM…TEPI, MFIA…SMAI, TWGL…DYAL, and IIPI…FAIV.

It localises to the cell membrane. Functionally, the phosphoenolpyruvate-dependent sugar phosphotransferase system (sugar PTS), a major carbohydrate active transport system, catalyzes the phosphorylation of incoming sugar substrates concomitantly with their translocation across the cell membrane. This system is involved in N-acetylglucosamine (GlcNAc) transport. High-affinity permease, which exhibits a narrow specificity for GlcNAc. Essential for C-signaling between vegetative growth and development. The chain is PTS system N-acetylglucosamine-specific EIIC component from Streptomyces coelicolor (strain ATCC BAA-471 / A3(2) / M145).